The chain runs to 278 residues: Cytoplasmic envelopment protein 1 (278 aa).

It belongs to the herpesviridae cytoplasmic envelopment protein 1 family. As to quaternary structure, interacts with BSRF1 tegument protein; the BBRF2-BSRF1 complexes oligomerize and might play a role in tethering the viral nucleocapsids to the host Golgi membrane during secondary envelopment.

Its subcellular location is the virion. It is found in the virion tegument. The protein localises to the host cytoplasm. It localises to the host Golgi apparatus. Functionally, plays a critical role in cytoplasmic virus egress. Participates in the final step of tegumentation and envelope acquisition within the host cytoplasm. This Homo sapiens (Human) protein is Cytoplasmic envelopment protein 1.